The chain runs to 718 residues: MLTRQARLLRRIPPPNAVLQSGLQRRHRSTDRYSNNIHTSSTQNAPAPVYDTPIREKGMTLEAKERVRAHVRKIQSSASTAAASPAVRPQPAQHFQAAPQPMPTNMPRFESDSQVKNGLDYSFIGLSGGQIFQEMMLRHDVKQVFGYPGGAILPVFDAIYNSPHFEFVLPRHEQGAGHMAEGYARVSGKPGVVLVTSGPGATNVITPMQDALSDGVPMVVFCGQVATNLIGSDAFQEADVVGISRSCTKWNVMVKDIAELPRRINEAFKIATTGRPGPVLVDLPKDVTAAILRTPIPAKSVQPGHSPYLPSNPLNPSSQPSDPLPGDADLITEAAQMINKAKRPIIFAGNGVLSSPEGPKLLKELSDKGRIPVTTTLQGLGAFDERDEKSLHMIGMHGSAYANFAMQEADVLIALGVRFDDRVTGKVDTFAPAAKAAAAEGRGGIIHFEIQPKNINKIVEAQIPVLGDVVASLGELVPQIEAVDRSAWIGRCKATKERYPFTYTPSQEGQKLKPQEVVQELDRQAEALGKEKFVISTGVGQHQMWACQYYRWTEPRSWVSSGGLGTMGFGLPSAIGAKVAAPEKYVIDIDGDASFSMTAMELATASQYDIGVKVLLFNNEFQGMVEQWQDLFYENRYSHTRMTNPDFVKLSESMGAKGLRCTKLEDLPRMMKEFLEYDGKRPIVLECLVSSEHVYPMIPAGKALHEQLLHPLLRNGSE.

Disordered regions lie at residues 1-53 (MLTR…YDTP) and 75-99 (QSSASTAAASPAVRPQPAQHFQAAP). Positions 32 to 45 (RYSNNIHTSSTQNA) are enriched in polar residues. Positions 76–99 (SSASTAAASPAVRPQPAQHFQAAP) are enriched in low complexity. Glu-173 contacts thiamine diphosphate. FAD is bound at residue Arg-275. Residues 301-326 (VQPGHSPYLPSNPLNPSSQPSDPLPG) form a disordered region. The span at 306–325 (SPYLPSNPLNPSSQPSDPLP) shows a compositional bias: low complexity. Residues 397–418 (HGSAYANFAMQEADVLIALGVR) and 449–468 (EIQPKNINKIVEAQIPVLGD) each bind FAD. The tract at residues 541–621 (QHQMWACQYY…VKVLLFNNEF (81 aa)) is thiamine pyrophosphate binding. Asp-592 and Asn-619 together coordinate Mg(2+).

The protein belongs to the TPP enzyme family. Requires Mg(2+) as cofactor. Thiamine diphosphate is required as a cofactor.

The protein resides in the mitochondrion. It carries out the reaction 2 pyruvate + H(+) = (2S)-2-acetolactate + CO2. The protein operates within amino-acid biosynthesis; L-isoleucine biosynthesis; L-isoleucine from 2-oxobutanoate: step 1/4. Its pathway is amino-acid biosynthesis; L-valine biosynthesis; L-valine from pyruvate: step 1/4. This is Acetolactate synthase, mitochondrial (ILV2) from Cryptococcus neoformans var. grubii serotype A (strain H99 / ATCC 208821 / CBS 10515 / FGSC 9487) (Filobasidiella neoformans var. grubii).